We begin with the raw amino-acid sequence, 515 residues long: Bifunctional purine biosynthesis protein PurH (515 aa).

Positions 1 to 145 (MTKRALISVS…KNHASVTVVV (145 aa)) constitute an MGS-like domain.

It belongs to the PurH family.

The enzyme catalyses (6R)-10-formyltetrahydrofolate + 5-amino-1-(5-phospho-beta-D-ribosyl)imidazole-4-carboxamide = 5-formamido-1-(5-phospho-D-ribosyl)imidazole-4-carboxamide + (6S)-5,6,7,8-tetrahydrofolate. It catalyses the reaction IMP + H2O = 5-formamido-1-(5-phospho-D-ribosyl)imidazole-4-carboxamide. The protein operates within purine metabolism; IMP biosynthesis via de novo pathway; 5-formamido-1-(5-phospho-D-ribosyl)imidazole-4-carboxamide from 5-amino-1-(5-phospho-D-ribosyl)imidazole-4-carboxamide (10-formyl THF route): step 1/1. Its pathway is purine metabolism; IMP biosynthesis via de novo pathway; IMP from 5-formamido-1-(5-phospho-D-ribosyl)imidazole-4-carboxamide: step 1/1. This chain is Bifunctional purine biosynthesis protein PurH, found in Streptococcus equi subsp. zooepidemicus (strain H70).